A 273-amino-acid polypeptide reads, in one-letter code: Short-chain dehydrogenase fogB (273 aa).

NADP(+)-binding residues include isoleucine 16, aspartate 66, arginine 128, tyrosine 174, lysine 178, valine 207, and threonine 209. Catalysis depends on tyrosine 174, which acts as the Proton donor. The active-site Lowers pKa of active site Tyr is lysine 178.

Belongs to the short-chain dehydrogenases/reductases (SDR) family.

In terms of biological role, short-chain dehydrogenase; part of the gene cluster that mediates the biosynthesis of flavoglaucin and congeners (including aspergin, dihydroauroglaucin and auroglaucin), prenylated salicylaldehyde derivatives carrying a saturated or an unsaturated C-7 side chain. The PKS fogA releases the carboxylic acid (8E,10E,12E)-3,5,7-trihydroxytetradeca-8,10,12-trienoic acid as its product, as well as derivatives with one and two double bonds. FogA is indeed able to reduce the initial triketide, thus being at least partially responsible for the differently saturated heptyl side chains of flavoglaucin congeners. The oxidoreductases fogB, fogC and fogD modify the nascent polyketide in fogA-bound form and, together, fogA, fogB, fogC and fogD are necessary for the formation of the aromatic core and the cyclized PKS products are released as salicyl alcohols. In particular, fogB is responsible for oxidation of a hydroxyl group or reduction of remaining double bond(s) at the C-7 residue whereas fogD is probably involved in the reductive release of the modified PKS products. The cytochrome P450 monooxygenase fogE is then responsible for the hydroxylation at C-3 of the benzene ring. The fogE products are substrates of the prenyltransferase fogH and the prenylated benzyl alcohols are subsequently oxidized by the fogF to produce the final aryl aldehydes flavoglaucin and congeners. The short-chain dehydrogenase fogG does not seem to be involved in the biosynthesis of the prenylated salicylaldehyde derivatives. The protein is Short-chain dehydrogenase fogB of Aspergillus ruber (strain CBS 135680).